Here is a 259-residue protein sequence, read N- to C-terminus: Peptide methionine sulfoxide reductase (259 aa).

The segment at 66–90 is disordered; the sequence is TRTPADASMDQSSIAQGPDDDIPAP.

This sequence belongs to the MsrA Met sulfoxide reductase family.

It catalyses the reaction L-methionyl-[protein] + [thioredoxin]-disulfide + H2O = L-methionyl-(S)-S-oxide-[protein] + [thioredoxin]-dithiol. The enzyme catalyses [thioredoxin]-disulfide + L-methionine + H2O = L-methionine (S)-S-oxide + [thioredoxin]-dithiol. In terms of biological role, has an important function as a repair enzyme for proteins that have been inactivated by oxidation. Catalyzes the reversible oxidation-reduction of methionine sulfoxide in proteins to methionine. The sequence is that of Peptide methionine sulfoxide reductase from Lactuca sativa (Garden lettuce).